Reading from the N-terminus, the 247-residue chain is Proteasome subunit alpha (247 aa).

Belongs to the peptidase T1A family. In terms of assembly, the 20S proteasome core is composed of 14 alpha and 14 beta subunits that assemble into four stacked heptameric rings, resulting in a barrel-shaped structure. The two inner rings, each composed of seven catalytic beta subunits, are sandwiched by two outer rings, each composed of seven alpha subunits. The catalytic chamber with the active sites is on the inside of the barrel. Has a gated structure, the ends of the cylinder being occluded by the N-termini of the alpha-subunits. Is capped at one or both ends by the proteasome regulatory ATPase, PAN.

The protein resides in the cytoplasm. With respect to regulation, the formation of the proteasomal ATPase PAN-20S proteasome complex, via the docking of the C-termini of PAN into the intersubunit pockets in the alpha-rings, triggers opening of the gate for substrate entry. Interconversion between the open-gate and close-gate conformations leads to a dynamic regulation of the 20S proteasome proteolysis activity. Its function is as follows. Component of the proteasome core, a large protease complex with broad specificity involved in protein degradation. The polypeptide is Proteasome subunit alpha (Methanosarcina acetivorans (strain ATCC 35395 / DSM 2834 / JCM 12185 / C2A)).